A 224-amino-acid polypeptide reads, in one-letter code: MASPSICLLAALLALVSWQAIASDPSPLQDFCVADMHSPVLVNGFACLDPKYVNADHFFKAAMLDTPRKTNKVGSNVTLINVMQIPGLNTLGISIARIDYAPLGENPPHTHPRATEILTVLEGTLYVGFVTSNPNNTLFSKVLNKGDVFVFPEGLIHFQFNPNPHQPAVAIAALSSQNPGAITIANAVFGSKPPISDIVLAKAFQVEKGTIDWLQAQFWENNHY.

Residues 1-22 (MASPSICLLAALLALVSWQAIA) form the signal peptide. The cysteines at positions 32 and 47 are disulfide-linked. A Cupin type-1 domain is found at 62–212 (AMLDTPRKTN…AFQVEKGTID (151 aa)). The N-linked (GlcNAc...) asparagine glycan is linked to Asn76. 3 residues coordinate Mn(2+): His109, His111, and Glu116. N-linked (GlcNAc...) asparagine glycosylation occurs at Asn135. His157 is a binding site for Mn(2+).

Belongs to the germin family. As to quaternary structure, oligomer (believed to be a pentamer but probably hexamer).

The protein localises to the secreted. It localises to the extracellular space. The protein resides in the apoplast. Its function is as follows. Plays a role in broad-spectrum disease resistance. Probably has no oxalate oxidase activity even if the active site is conserved. This is Germin-like protein 8-10 (GLP2) from Oryza sativa subsp. japonica (Rice).